The sequence spans 221 residues: Stromal cell-derived factor 2-like protein 1 (221 aa).

An N-terminal signal peptide occupies residues 1 to 28 (MWSAGRGGAAWPVLLGLLLALLVPGGGA). MIR domains follow at residues 33-87 (AELV…IRGG), 95-150 (GSPV…VRCS), and 151-205 (GQHW…AMEG). Position 215 is a phosphoserine (Ser215). A Prevents secretion from ER motif is present at residues 218 to 221 (HDEL).

In terms of assembly, part of a large chaperone multiprotein complex comprising CABP1, DNAJB11, HSP90B1, HSPA5, HYOU, PDIA2, PDIA4, PPIB, SDF2L1, UGGT1 and very small amounts of ERP29, but not, or at very low levels, CALR nor CANX. As to expression, ubiquitously expressed with high expression in testis, moderate expression in the pancreas, spleen, prostate, small intestine and colon. Very low expression is seen in brain and skeletal muscle.

Its subcellular location is the endoplasmic reticulum lumen. This Homo sapiens (Human) protein is Stromal cell-derived factor 2-like protein 1 (SDF2L1).